The following is a 1188-amino-acid chain: Oxysterol-binding protein homolog 1 (1188 aa).

3 ANK repeats span residues 51–80 (VLHLMLHYAVQVAPMAVIKEIVHHWVSTTN), 96–125 (NGNTPLHIAAYQSRGDIVAFLLDQPTINDC), and 196–225 (TGDTVLHEFVKKRDVIMCRWLLEHGADPFK). The PH domain maps to 330-379 (MSSCSLHLDSSEKLKFEIIGGNNGVIRWHLKGNHPIETNRWVWAIQGAIR). Serine 394 carries the phosphoserine modification. Disordered regions lie at residues 415 to 546 (ATSK…GDED) and 661 to 692 (QKKLNNQPQVETEANEESDDANSMIKGSQEST). Residues 424 to 433 (PHLSKSTLTQ) are compositionally biased toward polar residues. A compositionally biased stretch (low complexity) spans 443-462 (TNNNNNKSNNDYDDNNNNNN). Residues 463-473 (NDDDDYDDDDE) show a composition bias toward acidic residues. Phosphoserine is present on residues serine 490 and serine 500. The span at 514–529 (PSDDEGYSEDDSDDDG) shows a compositional bias: acidic residues. Serine 678, serine 683, and serine 691 each carry phosphoserine. A phosphothreonine mark is found at threonine 692 and threonine 694. A phosphoserine mark is found at serine 708 and serine 712. The FFAT motif lies at 716-722 (EFFDAEE). The segment at 721–755 (EEAASDKKANDSEDLTTNKETPANAKPQEEAPEDE) is disordered. The OSBP-related domain (ORD) stretch occupies residues 800–1174 (LWSVLKSMVG…YWKFNGEYWN (375 aa)). Ergosterol-binding residues include aspartate 834 and lysine 962.

This sequence belongs to the OSBP family. In terms of assembly, interacts with NVJ1. Interacts with the AAA ATPase AFG2; regulates OSH1 membrane association. AFG2 is required for membrane dissociation of OSH1. Interacts with SCS2.

Its subcellular location is the golgi apparatus membrane. It is found in the nucleus outer membrane. The protein resides in the endoplasmic reticulum membrane. It localises to the vacuole membrane. Its function is as follows. Lipid transport protein (LTP) involved in non-vesicular transfer of lipids between membranes. Functions in phosphoinositide-coupled directional transport of various lipids by carrying the lipid molecule in a hydrophobic pocket and transferring it between membranes through the cytosol. Involved in maintenance of intracellular sterol distribution and homeostasis. Involved in non-vesicular transport of ergosterol and PI(4)P at the NVJ. Binds sterol and PI4P in a mutually exclusive manner. May be involved in formation of PMN vesicles by altering the membrane lipid composition. The polypeptide is Oxysterol-binding protein homolog 1 (Saccharomyces cerevisiae (strain ATCC 204508 / S288c) (Baker's yeast)).